The primary structure comprises 124 residues: Sporulation initiation phosphotransferase F (124 aa).

The region spanning 5-119 is the Response regulatory domain; sequence KILIVDDQYG…EIRDAVKKYL (115 aa). Residues D10, D11, D54, and K56 each contribute to the Mg(2+) site. At D54 the chain carries 4-aspartylphosphate.

Mg(2+) is required as a cofactor. Phosphorylated by KinA and KinB. Dephosphorylated by RapA and RapB.

It localises to the cytoplasm. Functionally, key element in the phosphorelay regulating sporulation initiation. Phosphorylation of spo0B during sporulation initiation. The chain is Sporulation initiation phosphotransferase F (spo0F) from Bacillus subtilis (strain 168).